Here is a 61-residue protein sequence, read N- to C-terminus: MKGTPSFGKMNKSHTHIRCRRCGRNAYNVSKHYCAACGFGKTKKIRRYSWQNKKVNGVRIR.

4 residues coordinate Zn(2+): Cys19, Cys22, Cys34, and Cys37. A C4-type zinc finger spans residues 19–37 (CRRCGRNAYNVSKHYCAAC).

It belongs to the eukaryotic ribosomal protein eL37 family. The cofactor is Zn(2+).

In terms of biological role, binds to the 23S rRNA. The protein is Large ribosomal subunit protein eL37 of Saccharolobus islandicus (strain L.S.2.15 / Lassen #1) (Sulfolobus islandicus).